Consider the following 1132-residue polypeptide: Phytochrome B (1132 aa).

Residues 1 to 11 are compositionally biased toward basic residues; that stretch reads MASGSRTKHSH. Residues 1-27 form a disordered region; the sequence is MASGSRTKHSHQSGQGQVQAQSSGTSN. Low complexity predominate over residues 12–26; it reads QSGQGQVQAQSSGTS. A GAF domain is found at 231–409; it reads DVKLLCDTVV…AFGLQLNMEL (179 aa). Cys336 contacts phytochromobilin. PAS domains follow at residues 623 to 694 and 757 to 828; these read VARE…LRGE and DYKA…MIVL. The Histidine kinase domain maps to 905-1125; that stretch reads YLCQEIKSPL…LIILDLPMTR (221 aa).

This sequence belongs to the phytochrome family. Homodimer. Post-translationally, contains one covalently linked phytochromobilin chromophore.

In terms of biological role, regulatory photoreceptor which exists in two forms that are reversibly interconvertible by light: the Pr form that absorbs maximally in the red region of the spectrum and the Pfr form that absorbs maximally in the far-red region. Photoconversion of Pr to Pfr induces an array of morphogenic responses, whereas reconversion of Pfr to Pr cancels the induction of those responses. Pfr controls the expression of a number of nuclear genes including those encoding the small subunit of ribulose-bisphosphate carboxylase, chlorophyll A/B binding protein, protochlorophyllide reductase, rRNA, etc. It also controls the expression of its own gene(s) in a negative feedback fashion. The sequence is that of Phytochrome B (PHYB) from Nicotiana tabacum (Common tobacco).